We begin with the raw amino-acid sequence, 388 residues long: 1-deoxy-D-xylulose 5-phosphate reductoisomerase (388 aa).

NADPH contacts are provided by Thr15, Gly16, Ser17, Ile18, and Asn127. Lys128 contacts 1-deoxy-D-xylulose 5-phosphate. Residue Glu129 participates in NADPH binding. Asp153 contacts Mn(2+). Residues Ser154, Glu155, Ser179, and His202 each coordinate 1-deoxy-D-xylulose 5-phosphate. Glu155 provides a ligand contact to Mn(2+). Residue Gly208 coordinates NADPH. 1-deoxy-D-xylulose 5-phosphate contacts are provided by Ser215, Asn220, Lys221, and Glu224. A Mn(2+)-binding site is contributed by Glu224.

The protein belongs to the DXR family. The cofactor is Mg(2+). Mn(2+) serves as cofactor.

It catalyses the reaction 2-C-methyl-D-erythritol 4-phosphate + NADP(+) = 1-deoxy-D-xylulose 5-phosphate + NADPH + H(+). It functions in the pathway isoprenoid biosynthesis; isopentenyl diphosphate biosynthesis via DXP pathway; isopentenyl diphosphate from 1-deoxy-D-xylulose 5-phosphate: step 1/6. Catalyzes the NADPH-dependent rearrangement and reduction of 1-deoxy-D-xylulose-5-phosphate (DXP) to 2-C-methyl-D-erythritol 4-phosphate (MEP). This Bacteroides fragilis (strain ATCC 25285 / DSM 2151 / CCUG 4856 / JCM 11019 / LMG 10263 / NCTC 9343 / Onslow / VPI 2553 / EN-2) protein is 1-deoxy-D-xylulose 5-phosphate reductoisomerase.